The chain runs to 318 residues: Transaldolase (318 aa).

Catalysis depends on Lys131, which acts as the Schiff-base intermediate with substrate.

This sequence belongs to the transaldolase family. Type 1 subfamily. As to quaternary structure, homodimer.

It localises to the cytoplasm. The enzyme catalyses D-sedoheptulose 7-phosphate + D-glyceraldehyde 3-phosphate = D-erythrose 4-phosphate + beta-D-fructose 6-phosphate. The protein operates within carbohydrate degradation; pentose phosphate pathway; D-glyceraldehyde 3-phosphate and beta-D-fructose 6-phosphate from D-ribose 5-phosphate and D-xylulose 5-phosphate (non-oxidative stage): step 2/3. In terms of biological role, transaldolase is important for the balance of metabolites in the pentose-phosphate pathway. This is Transaldolase from Cellvibrio japonicus (strain Ueda107) (Pseudomonas fluorescens subsp. cellulosa).